The chain runs to 185 residues: NADH-quinone oxidoreductase subunit B (185 aa).

4 residues coordinate [4Fe-4S] cluster: Cys37, Cys38, Cys103, and Cys132.

This sequence belongs to the complex I 20 kDa subunit family. NDH-1 is composed of 14 different subunits. Subunits NuoB, C, D, E, F, and G constitute the peripheral sector of the complex. [4Fe-4S] cluster is required as a cofactor.

The protein resides in the cell membrane. The catalysed reaction is a quinone + NADH + 5 H(+)(in) = a quinol + NAD(+) + 4 H(+)(out). NDH-1 shuttles electrons from NADH, via FMN and iron-sulfur (Fe-S) centers, to quinones in the respiratory chain. The immediate electron acceptor for the enzyme in this species is believed to be a menaquinone. Couples the redox reaction to proton translocation (for every two electrons transferred, four hydrogen ions are translocated across the cytoplasmic membrane), and thus conserves the redox energy in a proton gradient. The sequence is that of NADH-quinone oxidoreductase subunit B from Thermobifida fusca (strain YX).